A 421-amino-acid chain; its full sequence is D-amino acid dehydrogenase (421 aa).

3–17 provides a ligand contact to FAD; it reads ILILGSGVVGTASAY.

It belongs to the DadA oxidoreductase family. It depends on FAD as a cofactor.

It catalyses the reaction a D-alpha-amino acid + A + H2O = a 2-oxocarboxylate + AH2 + NH4(+). The protein operates within amino-acid degradation; D-alanine degradation; NH(3) and pyruvate from D-alanine: step 1/1. Oxidative deamination of D-amino acids. The sequence is that of D-amino acid dehydrogenase from Xanthobacter autotrophicus (strain ATCC BAA-1158 / Py2).